The chain runs to 228 residues: Ribonuclease 3 (228 aa).

An RNase III domain is found at 5 to 127 (LMALQARLQH…VIGAVYLDAG (123 aa)). Residue E40 coordinates Mg(2+). D44 is an active-site residue. D113 and E116 together coordinate Mg(2+). The active site involves E116. Positions 154–224 (DPKTELQEWL…AAAMLQTLKA (71 aa)) constitute a DRBM domain.

The protein belongs to the ribonuclease III family. As to quaternary structure, homodimer. Requires Mg(2+) as cofactor.

Its subcellular location is the cytoplasm. It catalyses the reaction Endonucleolytic cleavage to 5'-phosphomonoester.. Its function is as follows. Digests double-stranded RNA. Involved in the processing of primary rRNA transcript to yield the immediate precursors to the large and small rRNAs (23S and 16S). Processes some mRNAs, and tRNAs when they are encoded in the rRNA operon. Processes pre-crRNA and tracrRNA of type II CRISPR loci if present in the organism. In Albidiferax ferrireducens (strain ATCC BAA-621 / DSM 15236 / T118) (Rhodoferax ferrireducens), this protein is Ribonuclease 3.